The following is an 859-amino-acid chain: ATP-dependent DNA helicase PIF1 (859 aa).

A mitochondrion-targeting transit peptide spans 1–45 (MPKWIRSTLNHIIPRRPFICSFNSFLLLKNVSHAKLSFSMSSRGF). Ser-70 and Ser-72 each carry phosphoserine. Polar residues predominate over residues 142–157 (NSFDQSSQKKSRSTGF). The disordered stretch occupies residues 142-183 (NSFDQSSQKKSRSTGFKNPLRPALKKESSFDELQNSSISQER). Phosphoserine is present on Ser-169. Residues 172–182 (DELQNSSISQE) show a composition bias toward polar residues. Position 258 to 265 (258 to 265 (GSAGTGKS)) interacts with ATP. Ser-584 carries the post-translational modification Phosphoserine. Residues 727-746 (QAYVALSRAVSREGLQVLNF) mediate DNA binding. The disordered stretch occupies residues 782–859 (KRKLDYAPGP…GQDTEDHILE (78 aa)). Residues 800–809 (KSNSPAPISA) show a composition bias toward low complexity. The span at 844–859 (VSDEPRGQDTEDHILE) shows a compositional bias: basic and acidic residues.

Belongs to the helicase family. PIF1 subfamily. Monomer in solution. DNA binding induces dimerization. Associates with mitochondrial and telomeric DNA. Binding to mtDNA is non-specific and the protein seems to coat the entire mtDNA molecule. Binds to the telomerase RNA TLC1. Interacts with the mitochondrial single-strand DNA-binding protein RIM1. Mg(2+) is required as a cofactor. It depends on Mn(2+) as a cofactor. In terms of processing, phosphorylated. Undergoes RAD53-dependent phosphorylation in response to loss of mtDNA.

It is found in the nucleus. Its subcellular location is the nucleolus. The protein localises to the mitochondrion inner membrane. The catalysed reaction is Couples ATP hydrolysis with the unwinding of duplex DNA at the replication fork by translocating in the 5'-3' direction. This creates two antiparallel DNA single strands (ssDNA). The leading ssDNA polymer is the template for DNA polymerase III holoenzyme which synthesizes a continuous strand.. It carries out the reaction ATP + H2O = ADP + phosphate + H(+). Its function is as follows. DNA-dependent ATPase and 5'-3' DNA helicase required for the maintenance of both mitochondrial and nuclear genome stability. Efficiently unwinds G-quadruplex (G4) DNA structures and forked RNA-DNA hybrids. Appears to move along DNA in single nucleotide or base pair steps, powered by hydrolysis of 1 molecule of ATP. Processes at an unwinding rate of about 75 bp/s. Resolves G4 structures, preventing replication pausing and double-strand breaks (DSBs) at G4 motifs. Involved in the maintenance of telomeric DNA. Inhibits telomere elongation, de novo telomere formation and telomere addition to DSBs via catalytic inhibition of telomerase. Reduces the processivity of telomerase by displacing active telomerase from DNA ends. Releases telomerase by unwinding the short telomerase RNA/telomeric DNA hybrid that is the intermediate in the telomerase reaction. Involved in the maintenance of ribosomal (rDNA). Required for efficient fork arrest at the replication fork barrier within rDNA. Involved in the maintenance of mitochondrial (mtDNA). Required to maintain mtDNA under conditions that introduce dsDNA breaks in mtDNA, either preventing or repairing dsDNA breaks. May inhibit replication progression to allow time for repair. May have a general role in chromosomal replication by affecting Okazaki fragment maturation. May have a role in conjunction with DNA2 helicase/nuclease in 5'-flap extension during Okazaki fragment processing. The polypeptide is ATP-dependent DNA helicase PIF1 (Saccharomyces cerevisiae (strain YJM789) (Baker's yeast)).